We begin with the raw amino-acid sequence, 1010 residues long: Lethal(2) giant larvae protein homolog SRO77 (1010 aa).

14 WD repeats span residues 47–80 (TVTTFDYTQSLLAVATTAGEIHVYGQKQIEVVFT), 87–122 (IKHMRFIKGIYLIAVDEKSNIIVLSVHSKQILTTVF), 127–163 (ITCIETDPSLDWMLIGLESGSILIYDVDRNQMSKLKI), 182–215 (SIQWNPRDIGTILISYEHITVIYSFIDYKVKQHF), 240–275 (VIQSLYHPNSLHILTVHEDNSLVFWDVNSGKLIHAR), 299–364 (AIFK…QKLF), 372–407 (LINFLPLPKASPYFGGCHDTNLILLLLEDGELETLI), 431–504 (VTTC…FEVN), 518–595 (KNIS…STVI), 602–637 (VSAIMNSNIGFVAVGFIEGTLIILDRRGPAIIFNEN), 649–700 (VSTV…DATK), 709–763 (GINS…THAL), 768–815 (IATS…KNLR), and 829–852 (SILENGDIVIRTGKFQASLISVLN). The tract at residues 932–958 (SNAARKLPPGTEDHRYARPVRSSGRSN) is disordered.

This sequence belongs to the WD repeat L(2)GL family. Interacts with SEC9.

Its function is as follows. Acts as an allosteric regulator of polarized exocytosis by promoting the targeted fusion of vesicles with the plasma membrane. Involved in maintenance of ion homeostasis in cells exposed to NaCl stress. May be involved in the targeting of the myosin proteins to their intrinsic pathways. Multicopy suppressor of RHO3. May also participate in the maintenance of cell polarity and bud growth. The polypeptide is Lethal(2) giant larvae protein homolog SRO77 (SRO77) (Saccharomyces cerevisiae (strain ATCC 204508 / S288c) (Baker's yeast)).